The chain runs to 499 residues: Protein nucleotidyltransferase YdiU (499 aa).

ATP-binding residues include Gly95, Gly97, Arg98, Lys117, Asp129, Gly130, Arg180, and Arg187. Asp256 acts as the Proton acceptor in catalysis. Residues Asn257 and Asp266 each contribute to the Mg(2+) site. Asp266 provides a ligand contact to ATP.

Belongs to the SELO family. Mg(2+) is required as a cofactor. Mn(2+) serves as cofactor.

The catalysed reaction is L-seryl-[protein] + ATP = 3-O-(5'-adenylyl)-L-seryl-[protein] + diphosphate. The enzyme catalyses L-threonyl-[protein] + ATP = 3-O-(5'-adenylyl)-L-threonyl-[protein] + diphosphate. It catalyses the reaction L-tyrosyl-[protein] + ATP = O-(5'-adenylyl)-L-tyrosyl-[protein] + diphosphate. It carries out the reaction L-histidyl-[protein] + UTP = N(tele)-(5'-uridylyl)-L-histidyl-[protein] + diphosphate. The catalysed reaction is L-seryl-[protein] + UTP = O-(5'-uridylyl)-L-seryl-[protein] + diphosphate. The enzyme catalyses L-tyrosyl-[protein] + UTP = O-(5'-uridylyl)-L-tyrosyl-[protein] + diphosphate. Nucleotidyltransferase involved in the post-translational modification of proteins. It can catalyze the addition of adenosine monophosphate (AMP) or uridine monophosphate (UMP) to a protein, resulting in modifications known as AMPylation and UMPylation. This Dechloromonas aromatica (strain RCB) protein is Protein nucleotidyltransferase YdiU.